Consider the following 489-residue polypeptide: Cobyric acid synthase (489 aa).

Positions alanine 247–alanine 439 constitute a GATase cobBQ-type domain. The active-site Nucleophile is the cysteine 328. Histidine 431 is an active-site residue.

This sequence belongs to the CobB/CobQ family. CobQ subfamily.

Its pathway is cofactor biosynthesis; adenosylcobalamin biosynthesis. Functionally, catalyzes amidations at positions B, D, E, and G on adenosylcobyrinic A,C-diamide. NH(2) groups are provided by glutamine, and one molecule of ATP is hydrogenolyzed for each amidation. The polypeptide is Cobyric acid synthase (Marinobacter nauticus (strain ATCC 700491 / DSM 11845 / VT8) (Marinobacter aquaeolei)).